Consider the following 298-residue polypeptide: (S)-ureidoglycine aminohydrolase (298 aa).

The signal sequence occupies residues 1–20 (MRSLYLIVFIVISLVKASKS). Positions 222–288 (TMDFQPGEFL…ALGKTRSRYL (67 aa)) constitute a Cupin type-2 domain. Mn(2+) contacts are provided by E235, H237, H241, and Q275. Residue E235 participates in substrate binding. 3 residues coordinate substrate: Q275, Y287, and K291.

The protein belongs to the UGHY family. As to quaternary structure, homooctamer. Mn(2+) is required as a cofactor.

The protein resides in the endoplasmic reticulum. It carries out the reaction (S)-2-ureidoglycine + H2O = (S)-ureidoglycolate + NH4(+). Its function is as follows. Involved in the catabolism of purine nucleotides. Can use (S)-2-ureidoglycine as substrate, but not allantoate. The sequential activity of AAH, UGLYAH and UAH allows a complete purine breakdown without the intermediate generation of urea. The protein is (S)-ureidoglycine aminohydrolase (UGLYAH) of Arabidopsis thaliana (Mouse-ear cress).